The primary structure comprises 547 residues: Chaperonin GroEL (547 aa).

ATP is bound by residues 30-33, Lys51, 87-91, Gly415, 479-481, and Asp495; these read TLGP, DGTTT, and NAA.

Belongs to the chaperonin (HSP60) family. In terms of assembly, forms a cylinder of 14 subunits composed of two heptameric rings stacked back-to-back. Interacts with the co-chaperonin GroES.

Its subcellular location is the cytoplasm. It carries out the reaction ATP + H2O + a folded polypeptide = ADP + phosphate + an unfolded polypeptide.. Its function is as follows. Together with its co-chaperonin GroES, plays an essential role in assisting protein folding. The GroEL-GroES system forms a nano-cage that allows encapsulation of the non-native substrate proteins and provides a physical environment optimized to promote and accelerate protein folding. The sequence is that of Chaperonin GroEL from Pseudomonas savastanoi pv. phaseolicola (strain 1448A / Race 6) (Pseudomonas syringae pv. phaseolicola (strain 1448A / Race 6)).